The following is a 540-amino-acid chain: 2-isopropylmalate synthase (540 aa).

Residues 8 to 273 enclose the Pyruvate carboxyltransferase domain; the sequence is VLIFDTTLRD…FFGRDQDSPT (266 aa). 4 residues coordinate Mn(2+): Asp-17, His-208, His-210, and Asn-244. Residues 408 to 540 are regulatory domain; it reads QLQLVQVSCG…AVVLDARPTL (133 aa).

The protein belongs to the alpha-IPM synthase/homocitrate synthase family. LeuA type 1 subfamily. In terms of assembly, homodimer. The cofactor is Mn(2+).

It localises to the cytoplasm. It catalyses the reaction 3-methyl-2-oxobutanoate + acetyl-CoA + H2O = (2S)-2-isopropylmalate + CoA + H(+). The protein operates within amino-acid biosynthesis; L-leucine biosynthesis; L-leucine from 3-methyl-2-oxobutanoate: step 1/4. In terms of biological role, catalyzes the condensation of the acetyl group of acetyl-CoA with 3-methyl-2-oxobutanoate (2-ketoisovalerate) to form 3-carboxy-3-hydroxy-4-methylpentanoate (2-isopropylmalate). In Parasynechococcus marenigrum (strain WH8102), this protein is 2-isopropylmalate synthase.